Here is a 680-residue protein sequence, read N- to C-terminus: Lipase 1 (680 aa).

The signal sequence occupies residues 1–34 (MKSQNKYSIRKFSVGASSILIATLLFLSGGQAQA). A propeptide spanning residues 35-290 (AEKQVNMGNS…AKAKDDQTNK (256 aa)) is cleaved from the precursor. The segment at 82–259 (KNLHNDKTIS…PTKDNDKKNG (178 aa)) is disordered. Residues 84-112 (LHNDKTISEENHRKTDDLNKDQLKDDKKS) show a composition bias toward basic and acidic residues. The segment covering 125 to 138 (KNNNANPSDVNQGL) has biased composition (polar residues). A compositionally biased stretch (low complexity) spans 148–170 (SKVASQQQSKEADNSQDSNANNN). A compositionally biased stretch (polar residues) spans 204-223 (QPQQNNQANDKITNYNFNNE). Residues 224 to 234 (QEVKPQKDEKT) show a composition bias toward basic and acidic residues. Residues 235 to 246 (LSVSDLKNNQKS) show a composition bias toward polar residues. Catalysis depends on serine 408, which acts as the Nucleophile. The active-site Charge relay system is the aspartate 600. Aspartate 638 is a binding site for Ca(2+). The active-site Charge relay system is histidine 639. Positions 641, 646, and 649 each coordinate Ca(2+).

This sequence belongs to the AB hydrolase superfamily. Lipase family.

Its subcellular location is the secreted. The enzyme catalyses a triacylglycerol + H2O = a diacylglycerol + a fatty acid + H(+). This is Lipase 1 (lip1) from Staphylococcus aureus (strain MSSA476).